Here is a 262-residue protein sequence, read N- to C-terminus: Thiazole synthase (262 aa).

The Schiff-base intermediate with DXP role is filled by K98. Residues G159, 186–187 (AG), and 208–209 (NT) each bind 1-deoxy-D-xylulose 5-phosphate.

Belongs to the ThiG family. In terms of assembly, homotetramer. Forms heterodimers with either ThiH or ThiS.

It localises to the cytoplasm. The catalysed reaction is [ThiS sulfur-carrier protein]-C-terminal-Gly-aminoethanethioate + 2-iminoacetate + 1-deoxy-D-xylulose 5-phosphate = [ThiS sulfur-carrier protein]-C-terminal Gly-Gly + 2-[(2R,5Z)-2-carboxy-4-methylthiazol-5(2H)-ylidene]ethyl phosphate + 2 H2O + H(+). Its pathway is cofactor biosynthesis; thiamine diphosphate biosynthesis. Its function is as follows. Catalyzes the rearrangement of 1-deoxy-D-xylulose 5-phosphate (DXP) to produce the thiazole phosphate moiety of thiamine. Sulfur is provided by the thiocarboxylate moiety of the carrier protein ThiS. In vitro, sulfur can be provided by H(2)S. This chain is Thiazole synthase, found in Hahella chejuensis (strain KCTC 2396).